The primary structure comprises 464 residues: Cysteine--tRNA ligase (464 aa).

Cys-29 provides a ligand contact to Zn(2+). Residues 31 to 41 (ATVQGVPHIGH) carry the 'HIGH' region motif. A disordered region spans residues 160–180 (RLDEVQQGESTASGKRDPRDF). Zn(2+) contacts are provided by Cys-208, His-233, and Glu-237. The short motif at 264–268 (KMSKS) is the 'KMSKS' region element. Lys-267 lines the ATP pocket.

The protein belongs to the class-I aminoacyl-tRNA synthetase family. In terms of assembly, monomer. The cofactor is Zn(2+).

Its subcellular location is the cytoplasm. It carries out the reaction tRNA(Cys) + L-cysteine + ATP = L-cysteinyl-tRNA(Cys) + AMP + diphosphate. This chain is Cysteine--tRNA ligase, found in Saccharopolyspora erythraea (strain ATCC 11635 / DSM 40517 / JCM 4748 / NBRC 13426 / NCIMB 8594 / NRRL 2338).